Here is a 450-residue protein sequence, read N- to C-terminus: Tubulin alpha chain (450 aa).

Position 11 (Gln-11) interacts with GTP. Lys-40 is modified (N6-acetyllysine). GTP is bound by residues Glu-71, Gly-144, Thr-145, Thr-179, Asn-206, and Asn-228. Glu-71 contributes to the Mg(2+) binding site. Residue Glu-254 is part of the active site.

Belongs to the tubulin family. Dimer of alpha and beta chains. A typical microtubule is a hollow water-filled tube with an outer diameter of 25 nm and an inner diameter of 15 nM. Alpha-beta heterodimers associate head-to-tail to form protofilaments running lengthwise along the microtubule wall with the beta-tubulin subunit facing the microtubule plus end conferring a structural polarity. Microtubules usually have 13 protofilaments but different protofilament numbers can be found in some organisms and specialized cells. The cofactor is Mg(2+). Post-translationally, undergoes a tyrosination/detyrosination cycle, the cyclic removal and re-addition of a C-terminal tyrosine residue by the enzymes tubulin tyrosine carboxypeptidase (TTCP) and tubulin tyrosine ligase (TTL), respectively. In terms of processing, acetylation of alpha chains at Lys-40 stabilizes microtubules and affects affinity and processivity of microtubule motors. This modification has a role in multiple cellular functions, ranging from cell motility, cell cycle progression or cell differentiation to intracellular trafficking and signaling.

The protein localises to the cytoplasm. It is found in the cytoskeleton. The catalysed reaction is GTP + H2O = GDP + phosphate + H(+). Functionally, tubulin is the major constituent of microtubules, a cylinder consisting of laterally associated linear protofilaments composed of alpha- and beta-tubulin heterodimers. Microtubules grow by the addition of GTP-tubulin dimers to the microtubule end, where a stabilizing cap forms. Below the cap, tubulin dimers are in GDP-bound state, owing to GTPase activity of alpha-tubulin. In Prunus dulcis (Almond), this protein is Tubulin alpha chain (TUBA).